The following is a 389-amino-acid chain: Cytochrome b (389 aa).

Transmembrane regions (helical) follow at residues 32–52 (FGSLLALCLIIQILTGCFLAM), 76–98 (YILRYTHANVASFFFIFIYVHIG), 113–133 (LWSIGVIILVLMMAIGFLGYV), and 179–199 (FFSLHYILPFVLAALAVAHMI). 2 residues coordinate heme b: His-82 and His-96. 2 residues coordinate heme b: His-183 and His-197. Position 202 (His-202) interacts with a ubiquinone. Helical transmembrane passes span 225-245 (FIFKDLVTIFAFFLVLSIIVF), 289-309 (LLGVLAMFGSLLILLIMPFVD), 322-342 (INMVFFTIFVCNFITLGLVGA), and 349-369 (FIFLGQVCTTIYFAYFFVIVP).

It belongs to the cytochrome b family. As to quaternary structure, fungal cytochrome b-c1 complex contains 10 subunits; 3 respiratory subunits, 2 core proteins and 5 low-molecular weight proteins. Cytochrome b-c1 complex is a homodimer. It depends on heme b as a cofactor.

It localises to the mitochondrion inner membrane. Functionally, component of the ubiquinol-cytochrome c reductase complex (complex III or cytochrome b-c1 complex) that is part of the mitochondrial respiratory chain. The b-c1 complex mediates electron transfer from ubiquinol to cytochrome c. Contributes to the generation of a proton gradient across the mitochondrial membrane that is then used for ATP synthesis. This Mycena viridimarginata protein is Cytochrome b (COB).